A 469-amino-acid polypeptide reads, in one-letter code: Glutamate--tRNA ligase (469 aa).

The 'HIGH' region signature appears at 11–21 (PSPTGFIHLGN). The short motif at 243 to 247 (KMSKR) is the 'KMSKS' region element. Residue K246 participates in ATP binding.

It belongs to the class-I aminoacyl-tRNA synthetase family. Glutamate--tRNA ligase type 1 subfamily. Monomer.

Its subcellular location is the cytoplasm. The catalysed reaction is tRNA(Glu) + L-glutamate + ATP = L-glutamyl-tRNA(Glu) + AMP + diphosphate. Functionally, catalyzes the attachment of glutamate to tRNA(Glu) in a two-step reaction: glutamate is first activated by ATP to form Glu-AMP and then transferred to the acceptor end of tRNA(Glu). This Burkholderia lata (strain ATCC 17760 / DSM 23089 / LMG 22485 / NCIMB 9086 / R18194 / 383) protein is Glutamate--tRNA ligase.